Here is a 340-residue protein sequence, read N- to C-terminus: MSIKAEYIWIDGTQPTAKLRSKTKILSDGSRLPRWGFDGSSTNQAEGHASDLVLEPVFSCPDPIRGGDHLLVLCEVLHTDLTPHPSNTRALLRPVAERFAGQEPIFGIEQEYTFLKGDRPLGFPEGGGYPAPQADYYCGVGADAIFGREIVEKHLDLCLAAGLGLSGINAEVMPGQWEFQVGALPPLEVSDHMWVARWLLHRVAEEFGVTASLDAKPAKGDWNGAGAHTNFSTRAMREGYDPIITACEALGQDDKPLEHVRQYGTGIEDRLTGAHETAPWDAYSYGASDRGASVRIPWQVEVEKKGYIEDRRPNANVDPYVVTRLMVDTCCTELARREQI.

Residues 3 to 82 (IKAEYIWIDG…LCEVLHTDLT (80 aa)) form the GS beta-grasp domain. The 253-residue stretch at 88–340 (TRALLRPVAE…CTELARREQI (253 aa)) folds into the GS catalytic domain. Positions 109, 111, 171, and 178 each coordinate Mg(2+). Glu-276 contacts L-glutamate.

This sequence belongs to the glutamine synthetase family. Homooctamer and homotetramer. Mg(2+) serves as cofactor.

Its subcellular location is the cytoplasm. The catalysed reaction is L-glutamate + NH4(+) + ATP = L-glutamine + ADP + phosphate + H(+). In terms of biological role, catalyzes the ATP-dependent biosynthesis of glutamine from glutamate and ammonia. This is Glutamine synthetase from Streptomyces hygroscopicus.